The following is a 538-amino-acid chain: MIVEELKLLPSSKAAKDYLNNQNDMLSFFDYNIHQPTVFQQRLSDLQEQPYDRDALSKALLSYQKRFAFHDKAAQQVEKLKDPRSVVVIGGQQAGLLTGPLYTIYKAVTIVLLAREQERALGVPVVPVFWIAGEDHDLDEINAVPIEKNGRWRSHRIEEKRKRIASEAGLNKETLAKWLATVFRSLPETEHTLPLYERVKTLAGRSNTYTDFFAELLLYLFRDEGLVVFDSGDPSFRTLEKSCFHMLIQKTKNVQGAFAHQVKKLEQAGYGRPIITEETNAHLFYVEEGSRYRIDYTGENYELNGKNQTFSREELLEHLTLHPERFSNNVVTRPVMQDALFPVLAFVAGPGEISYWATLKRVFHECGMKMSPVVPRISATCVPSAVQKWFAEKQYSYEEAIAHGLEKEKEGWLEEQTPWPIDQVVEEAITQIRHSHKPIKDLAEQIGETPGKLANKNWSIIESQLRFMERRMKRHVRERFEHELSKFDEAERWLKPNGLLQERHDHVIQLLNIVGDDFIPRLISMNINKMGVHYLVKL.

It belongs to the BshC family.

Its function is as follows. Involved in bacillithiol (BSH) biosynthesis. May catalyze the last step of the pathway, the addition of cysteine to glucosamine malate (GlcN-Mal) to generate BSH. This chain is Putative cysteine ligase BshC, found in Halalkalibacterium halodurans (strain ATCC BAA-125 / DSM 18197 / FERM 7344 / JCM 9153 / C-125) (Bacillus halodurans).